Here is a 422-residue protein sequence, read N- to C-terminus: Gamma-glutamyl phosphate reductase (422 aa).

This sequence belongs to the gamma-glutamyl phosphate reductase family.

Its subcellular location is the cytoplasm. It catalyses the reaction L-glutamate 5-semialdehyde + phosphate + NADP(+) = L-glutamyl 5-phosphate + NADPH + H(+). The protein operates within amino-acid biosynthesis; L-proline biosynthesis; L-glutamate 5-semialdehyde from L-glutamate: step 2/2. In terms of biological role, catalyzes the NADPH-dependent reduction of L-glutamate 5-phosphate into L-glutamate 5-semialdehyde and phosphate. The product spontaneously undergoes cyclization to form 1-pyrroline-5-carboxylate. The polypeptide is Gamma-glutamyl phosphate reductase (Chloroflexus aggregans (strain MD-66 / DSM 9485)).